Consider the following 219-residue polypeptide: Nuclear transcription factor Y subunit B-8 (219 aa).

Residues 1–26 (MPDSDNDSGGPSNYAGGELSSPREQD) form a disordered region. Residues 29 to 35 (LPIANVS) mediate DNA binding. Positions 56–67 (VQECVSEFISFI) are subunit association domain (SAD). Positions 119–134 (AAASTTGAGTSAASTT) are enriched in low complexity. 2 disordered regions span residues 119-142 (AAAS…QHTA) and 166-219 (GQPM…NRGA). A compositionally biased stretch (gly residues) spans 190–206 (GGRGGFGHHPGGGGGGS).

It belongs to the NFYB/HAP3 subunit family. Heterotrimeric transcription factor composed of three components, NF-YA, NF-YB and NF-YC. NF-YB and NF-YC must interact and dimerize for NF-YA association and DNA binding. Interacts with NFYC2, NFYC4 and NFYC6.

It localises to the cytoplasm. In terms of biological role, component of the NF-Y/HAP transcription factor complex. The chain is Nuclear transcription factor Y subunit B-8 from Oryza sativa subsp. japonica (Rice).